Here is a 261-residue protein sequence, read N- to C-terminus: Glucosamine-6-phosphate deaminase (261 aa).

The active-site Proton acceptor; for enolization step is the Asp67. Asp136 functions as the For ring-opening step in the catalytic mechanism. The active-site Proton acceptor; for ring-opening step is His138. The For ring-opening step role is filled by Glu143.

Belongs to the glucosamine/galactosamine-6-phosphate isomerase family. NagB subfamily.

The catalysed reaction is alpha-D-glucosamine 6-phosphate + H2O = beta-D-fructose 6-phosphate + NH4(+). The protein operates within amino-sugar metabolism; N-acetylneuraminate degradation; D-fructose 6-phosphate from N-acetylneuraminate: step 5/5. In terms of biological role, catalyzes the reversible isomerization-deamination of glucosamine 6-phosphate (GlcN6P) to form fructose 6-phosphate (Fru6P) and ammonium ion. This chain is Glucosamine-6-phosphate deaminase, found in Streptomyces avermitilis (strain ATCC 31267 / DSM 46492 / JCM 5070 / NBRC 14893 / NCIMB 12804 / NRRL 8165 / MA-4680).